A 373-amino-acid chain; its full sequence is Queuine tRNA-ribosyltransferase (373 aa).

Residue aspartate 90 is the Proton acceptor of the active site. Substrate-binding positions include 90-94, aspartate 144, glutamine 193, and glycine 220; that span reads DSGGF. The interval 251-257 is RNA binding; the sequence is GVGTPED. The active-site Nucleophile is aspartate 270. Residues 275 to 279 form an RNA binding; important for wobble base 34 recognition region; sequence TRNAR. Cysteine 308, cysteine 310, cysteine 313, and histidine 339 together coordinate Zn(2+).

The protein belongs to the queuine tRNA-ribosyltransferase family. Homodimer. Within each dimer, one monomer is responsible for RNA recognition and catalysis, while the other monomer binds to the replacement base PreQ1. The cofactor is Zn(2+).

The enzyme catalyses 7-aminomethyl-7-carbaguanine + guanosine(34) in tRNA = 7-aminomethyl-7-carbaguanosine(34) in tRNA + guanine. Its pathway is tRNA modification; tRNA-queuosine biosynthesis. In terms of biological role, catalyzes the base-exchange of a guanine (G) residue with the queuine precursor 7-aminomethyl-7-deazaguanine (PreQ1) at position 34 (anticodon wobble position) in tRNAs with GU(N) anticodons (tRNA-Asp, -Asn, -His and -Tyr). Catalysis occurs through a double-displacement mechanism. The nucleophile active site attacks the C1' of nucleotide 34 to detach the guanine base from the RNA, forming a covalent enzyme-RNA intermediate. The proton acceptor active site deprotonates the incoming PreQ1, allowing a nucleophilic attack on the C1' of the ribose to form the product. After dissociation, two additional enzymatic reactions on the tRNA convert PreQ1 to queuine (Q), resulting in the hypermodified nucleoside queuosine (7-(((4,5-cis-dihydroxy-2-cyclopenten-1-yl)amino)methyl)-7-deazaguanosine). The sequence is that of Queuine tRNA-ribosyltransferase from Campylobacter jejuni subsp. doylei (strain ATCC BAA-1458 / RM4099 / 269.97).